A 184-amino-acid polypeptide reads, in one-letter code: Large ribosomal subunit protein uL5 (184 aa).

Belongs to the universal ribosomal protein uL5 family. In terms of assembly, part of the 50S ribosomal subunit; part of the 5S rRNA/L5/L18/L25 subcomplex. Contacts the 5S rRNA and the P site tRNA. Forms a bridge to the 30S subunit in the 70S ribosome.

Functionally, this is one of the proteins that bind and probably mediate the attachment of the 5S RNA into the large ribosomal subunit, where it forms part of the central protuberance. In the 70S ribosome it contacts protein S13 of the 30S subunit (bridge B1b), connecting the 2 subunits; this bridge is implicated in subunit movement. Contacts the P site tRNA; the 5S rRNA and some of its associated proteins might help stabilize positioning of ribosome-bound tRNAs. The sequence is that of Large ribosomal subunit protein uL5 from Fervidobacterium nodosum (strain ATCC 35602 / DSM 5306 / Rt17-B1).